The following is a 312-amino-acid chain: DNA-directed RNA polymerase subunit alpha (312 aa).

The interval 1–226 (MIEFEKPIIT…EHLNLFTDLT (226 aa)) is alpha N-terminal domain (alpha-NTD). The segment at 243–312 (DEKVLDRTIE…DLGLGLKNDK (70 aa)) is alpha C-terminal domain (alpha-CTD).

This sequence belongs to the RNA polymerase alpha chain family. As to quaternary structure, homodimer. The RNAP catalytic core consists of 2 alpha, 1 beta, 1 beta' and 1 omega subunit. When a sigma factor is associated with the core the holoenzyme is formed, which can initiate transcription.

It carries out the reaction RNA(n) + a ribonucleoside 5'-triphosphate = RNA(n+1) + diphosphate. DNA-dependent RNA polymerase catalyzes the transcription of DNA into RNA using the four ribonucleoside triphosphates as substrates. The polypeptide is DNA-directed RNA polymerase subunit alpha (Streptococcus agalactiae serotype III (strain NEM316)).